Reading from the N-terminus, the 348-residue chain is GMP reductase (348 aa).

108 to 131 (ADFQKTKDIMALSDELIFICVDIA) provides a ligand contact to NADP(+). Residues glycine 181 and glycine 183 each coordinate K(+). Cysteine 186 (thioimidate intermediate) is an active-site residue. 216-239 (IIGDGGCSCAGDVSKAFGGGADFV) is an NADP(+) binding site.

The protein belongs to the IMPDH/GMPR family. GuaC type 1 subfamily. Homotetramer.

The catalysed reaction is IMP + NH4(+) + NADP(+) = GMP + NADPH + 2 H(+). Its function is as follows. Catalyzes the irreversible NADPH-dependent deamination of GMP to IMP. It functions in the conversion of nucleobase, nucleoside and nucleotide derivatives of G to A nucleotides, and in maintaining the intracellular balance of A and G nucleotides. The sequence is that of GMP reductase from Vibrio parahaemolyticus serotype O3:K6 (strain RIMD 2210633).